The sequence spans 321 residues: MAASKRLVVSCLFLVLLFAQANSQGLKVGFYSKTCPQLEGIVKKVVFDAMNKAPTLGAPLLRMFFHDCFVRGCDGSVLLDKPNNQGEKSAVPNLSLRGFGIIDDSKAALEKVCPGIVSCSDILALVARDAMVALEGPSWEVETGRRDGRVSNINEVNLPSPFDNITKLISDFRSKGLNEKDLVILSGGHTIGMGHCPLLTNRLYNFTGKGDSDPSLDSEYAAKLRKKCKPTDTTTALEMDPGSFKTFDLSYFTLVAKRRGLFQSDAALLDNSKTRAYVLQQIRTHGSMFFNDFGVSMVKMGRTGVLTGKAGEIRKTCRSAN.

An N-terminal signal peptide occupies residues 1–23 (MAASKRLVVSCLFLVLLFAQANS). Intrachain disulfides connect C35–C113, C68–C73, C119–C317, and C196–C228. H66 acts as the Proton acceptor in catalysis. 5 residues coordinate Ca(2+): D67, V70, G72, D74, and S76. P159 is a substrate binding site. Residue N164 is glycosylated (N-linked (GlcNAc...) asparagine). H189 contributes to the heme b binding site. A Ca(2+)-binding site is contributed by T190. Residue N205 is glycosylated (N-linked (GlcNAc...) asparagine). 3 residues coordinate Ca(2+): D240, S243, and D248.

It belongs to the peroxidase family. Classical plant (class III) peroxidase subfamily. It depends on heme b as a cofactor. Ca(2+) is required as a cofactor. In terms of tissue distribution, expressed in the whole plant, but preferentially in roots and flowers.

The protein localises to the secreted. The enzyme catalyses 2 a phenolic donor + H2O2 = 2 a phenolic radical donor + 2 H2O. Its function is as follows. Removal of H(2)O(2), oxidation of toxic reductants, biosynthesis and degradation of lignin, suberization, auxin catabolism, response to environmental stresses such as wounding, pathogen attack and oxidative stress. These functions might be dependent on each isozyme/isoform in each plant tissue. This chain is Peroxidase 27 (PER27), found in Arabidopsis thaliana (Mouse-ear cress).